The following is a 327-amino-acid chain: Gonadotropin-releasing hormone receptor (327 aa).

Topologically, residues 1–37 (MASASPEQNQNHCSAVNNSNMLMQGNLPTLTLSGKIR) are extracellular. Asn-17 carries an N-linked (GlcNAc...) asparagine glycan. Residues 38–57 (VTVTFFLFLLSTIFNASFLL) traverse the membrane as a helical segment. The Cytoplasmic segment spans residues 58–76 (KLQKWTQKKEKGKKLSRMK). A helical membrane pass occupies residues 77–96 (VLLKHLTLANLLETLIVMPL). Residues 97-114 (DGMWNITVQWYAGEFLCK) lie on the Extracellular side of the membrane. Residue Asn-101 is glycosylated (N-linked (GlcNAc...) asparagine). Residues Cys-113 and Cys-195 are joined by a disulfide bond. The helical transmembrane segment at 115–136 (VLSYLKLFSMYAPAFMMVVISL) threads the bilayer. Residues 137-163 (DRSLAITRPLAMKNNGKLGQSMIGLAW) are Cytoplasmic-facing. Residues 164–183 (LLSGIFAGPQLYIFRMIHLA) traverse the membrane as a helical segment. The Extracellular portion of the chain corresponds to 184–211 (DSSGQTEGFPQCVTHCSFPQWWHQAFYN). The chain crosses the membrane as a helical span at residues 212–231 (FFTFSCLFIIPLFITLICNA). At 232-280 (KIIFTLTRVLHQDPHELQLNQSKNNIPRARLRTLKMTVAFATSFTVCWT) the chain is on the cytoplasmic side. Residues 281–299 (PYYVLGIWYWFDPEMLNRV) form a helical membrane-spanning segment. At 300 to 305 (SDPVNH) the chain is on the extracellular side. A helical membrane pass occupies residues 306-325 (FFFLFALLNPCFDPLIYGYF). The Cytoplasmic portion of the chain corresponds to 326–327 (SL).

Belongs to the G-protein coupled receptor 1 family.

The protein localises to the cell membrane. Receptor for gonadotropin releasing hormone (GnRH) that mediates the action of GnRH to stimulate the secretion of the gonadotropic hormones luteinizing hormone (LH) and follicle-stimulating hormone (FSH). This receptor mediates its action by association with G-proteins that activate a phosphatidylinositol-calcium second messenger system. The chain is Gonadotropin-releasing hormone receptor (GNRHR) from Canis lupus familiaris (Dog).